The following is a 69-amino-acid chain: MEMAYWVMVMMMVWITAPLSEGGKLNDVIRALAPDDVTPQFILRSLISRRRSDSDVREVPVCSWKICPP.

An N-terminal signal peptide occupies residues 1–22; it reads MEMAYWVMVMMMVWITAPLSEG. Residues 23-57 constitute a propeptide that is removed on maturation; the sequence is GKLNDVIRALAPDDVTPQFILRSLISRRRSDSDVR. Glu58 is modified (4-carboxyglutamate). Cysteines 62 and 67 form a disulfide. Position 64 is a D-tryptophan (Trp64). A 4-hydroxyproline mark is found at Pro68 and Pro69.

This sequence belongs to the conotoxin C superfamily. Consomatin family. In terms of tissue distribution, expressed by the venom duct.

The protein localises to the secreted. Its function is as follows. Moderately activates human somatostatin receptors (SSTR) with a preferential activation of SSTR1 and SSTR4. In vivo, does not cause behavioral changes in mice within a few minutes of intracranial injection, but causes a progressive loss of movement thereafter. Four to five hours after injection, mice recover, even with the highest dose tested. Shows antinociception and antihyperalgesia activities in two mouse models of acute pain, most probably by acting outside the central nervous system. In Conus betulinus (Beech cone), this protein is Consomatin Be1.